We begin with the raw amino-acid sequence, 878 residues long: Aconitate hydratase A (878 aa).

Residues Cys426, Cys492, and Cys495 each contribute to the [4Fe-4S] cluster site.

Belongs to the aconitase/IPM isomerase family. As to quaternary structure, monomer. The cofactor is [4Fe-4S] cluster.

It catalyses the reaction citrate = D-threo-isocitrate. The catalysed reaction is (2S,3R)-3-hydroxybutane-1,2,3-tricarboxylate = 2-methyl-cis-aconitate + H2O. The protein operates within carbohydrate metabolism; tricarboxylic acid cycle; isocitrate from oxaloacetate: step 2/2. It participates in organic acid metabolism; propanoate degradation. Its function is as follows. Involved in the catabolism of short chain fatty acids (SCFA) via the tricarboxylic acid (TCA)(acetyl degradation route) and probably the 2-methylcitrate cycle I (propionate degradation route). Catalyzes the reversible isomerization of citrate to isocitrate via cis-aconitate. Could catalyze the hydration of 2-methyl-cis-aconitate to yield (2R,3S)-2-methylisocitrate. The apo form of AcnA functions as a RNA-binding regulatory protein. This Rickettsia conorii (strain ATCC VR-613 / Malish 7) protein is Aconitate hydratase A (acnA).